The sequence spans 695 residues: Polyribonucleotide nucleotidyltransferase (695 aa).

Residues aspartate 488 and aspartate 494 each contribute to the Mg(2+) site. The KH domain occupies proline 554–valine 613. The 68-residue stretch at asparagine 623–lysine 690 folds into the S1 motif domain.

It belongs to the polyribonucleotide nucleotidyltransferase family. As to quaternary structure, component of the RNA degradosome, which is a multiprotein complex involved in RNA processing and mRNA degradation. Mg(2+) serves as cofactor.

It localises to the cytoplasm. The catalysed reaction is RNA(n+1) + phosphate = RNA(n) + a ribonucleoside 5'-diphosphate. Involved in mRNA degradation. Catalyzes the phosphorolysis of single-stranded polyribonucleotides processively in the 3'- to 5'-direction. The sequence is that of Polyribonucleotide nucleotidyltransferase from Vesicomyosocius okutanii subsp. Calyptogena okutanii (strain HA).